A 255-amino-acid chain; its full sequence is tRNA (guanine-N(1)-)-methyltransferase (255 aa).

S-adenosyl-L-methionine is bound by residues glycine 117 and 137-142 (LGDFVL).

The protein belongs to the RNA methyltransferase TrmD family. In terms of assembly, homodimer.

Its subcellular location is the cytoplasm. It catalyses the reaction guanosine(37) in tRNA + S-adenosyl-L-methionine = N(1)-methylguanosine(37) in tRNA + S-adenosyl-L-homocysteine + H(+). In terms of biological role, specifically methylates guanosine-37 in various tRNAs. The polypeptide is tRNA (guanine-N(1)-)-methyltransferase (Paraburkholderia phymatum (strain DSM 17167 / CIP 108236 / LMG 21445 / STM815) (Burkholderia phymatum)).